We begin with the raw amino-acid sequence, 136 residues long: ATP synthase epsilon chain (136 aa).

It belongs to the ATPase epsilon chain family. In terms of assembly, F-type ATPases have 2 components, CF(1) - the catalytic core - and CF(0) - the membrane proton channel. CF(1) has five subunits: alpha(3), beta(3), gamma(1), delta(1), epsilon(1). CF(0) has three main subunits: a, b and c.

It is found in the cellular thylakoid membrane. In terms of biological role, produces ATP from ADP in the presence of a proton gradient across the membrane. In Parasynechococcus marenigrum (strain WH8102), this protein is ATP synthase epsilon chain.